A 249-amino-acid polypeptide reads, in one-letter code: Putative SAP domain-containing protein 049L (249 aa).

Basic and acidic residues-rich tracts occupy residues 1–12 (MAAPKAEGEDKP), 22–38 (PKPE…KEFC), and 95–107 (KKAE…KLDE). Positions 1–110 (MAAPKAEGED…DDKKLDEATG (110 aa)) are disordered. An SAP domain is found at 119 to 153 (LSKLTIQTLKGMCKTRNLKISGNKAALVQRLIEAD).

The sequence is that of Putative SAP domain-containing protein 049L from Frog virus 3 (isolate Goorha) (FV-3).